The following is a 707-amino-acid chain: Elongation factor G (707 aa).

The tr-type G domain occupies 8 to 297 (ERVRNIGIAA…AVVDYLPSPV (290 aa)). Residues 17–24 (AHIDAGKT), 96–100 (DTPGH), and 150–153 (NKMD) contribute to the GTP site.

The protein belongs to the TRAFAC class translation factor GTPase superfamily. Classic translation factor GTPase family. EF-G/EF-2 subfamily.

The protein resides in the cytoplasm. Functionally, catalyzes the GTP-dependent ribosomal translocation step during translation elongation. During this step, the ribosome changes from the pre-translocational (PRE) to the post-translocational (POST) state as the newly formed A-site-bound peptidyl-tRNA and P-site-bound deacylated tRNA move to the P and E sites, respectively. Catalyzes the coordinated movement of the two tRNA molecules, the mRNA and conformational changes in the ribosome. In Synechococcus sp. (strain JA-2-3B'a(2-13)) (Cyanobacteria bacterium Yellowstone B-Prime), this protein is Elongation factor G.